A 192-amino-acid chain; its full sequence is Epididymal-specific lipocalin-5 (192 aa).

The signal sequence occupies residues 1–26; it reads MCSVARHMESIMLFTLLGLCVGLAAG. Cys89 and Cys183 form a disulfide bridge.

This sequence belongs to the calycin superfamily. Lipocalin family. 2 different forms with differently processed N-termini exist. As to expression, epididymal fluid of the caudal and corpus regions (at protein level).

The protein localises to the secreted. Functionally, associates with spermatozoa in the epididymal fluid but does not bind tightly to them. Binds both all-trans and 13-cis retinoic acid. May act as a retinoid carrier protein which is required for epididymal function and/or sperm maturation. The protein is Epididymal-specific lipocalin-5 of Mus musculus (Mouse).